The following is a 109-amino-acid chain: Nucleoid-associated protein NT01EI_1109 (109 aa).

Residues 89–109 (KERMASVSSGMQLPPGFKMPF) are disordered.

It belongs to the YbaB/EbfC family. Homodimer.

Its subcellular location is the cytoplasm. It is found in the nucleoid. Binds to DNA and alters its conformation. May be involved in regulation of gene expression, nucleoid organization and DNA protection. The chain is Nucleoid-associated protein NT01EI_1109 from Edwardsiella ictaluri (strain 93-146).